We begin with the raw amino-acid sequence, 188 residues long: Elongation factor P (188 aa).

The protein belongs to the elongation factor P family.

It is found in the cytoplasm. It participates in protein biosynthesis; polypeptide chain elongation. In terms of biological role, involved in peptide bond synthesis. Stimulates efficient translation and peptide-bond synthesis on native or reconstituted 70S ribosomes in vitro. Probably functions indirectly by altering the affinity of the ribosome for aminoacyl-tRNA, thus increasing their reactivity as acceptors for peptidyl transferase. This chain is Elongation factor P, found in Nitrobacter hamburgensis (strain DSM 10229 / NCIMB 13809 / X14).